The primary structure comprises 311 residues: 4-hydroxy-3-methylbut-2-enyl diphosphate reductase (311 aa).

Cys12 provides a ligand contact to [4Fe-4S] cluster. (2E)-4-hydroxy-3-methylbut-2-enyl diphosphate is bound by residues His43 and His81. Dimethylallyl diphosphate contacts are provided by His43 and His81. 2 residues coordinate isopentenyl diphosphate: His43 and His81. Cys103 is a binding site for [4Fe-4S] cluster. (2E)-4-hydroxy-3-methylbut-2-enyl diphosphate is bound at residue His131. Dimethylallyl diphosphate is bound at residue His131. His131 contacts isopentenyl diphosphate. The active-site Proton donor is the Glu133. Residue Thr170 participates in (2E)-4-hydroxy-3-methylbut-2-enyl diphosphate binding. Cys198 is a binding site for [4Fe-4S] cluster. Ser226, Asn228, and Ser271 together coordinate (2E)-4-hydroxy-3-methylbut-2-enyl diphosphate. Dimethylallyl diphosphate-binding residues include Ser226, Asn228, and Ser271. Isopentenyl diphosphate-binding residues include Ser226, Asn228, and Ser271.

It belongs to the IspH family. It depends on [4Fe-4S] cluster as a cofactor.

It carries out the reaction isopentenyl diphosphate + 2 oxidized [2Fe-2S]-[ferredoxin] + H2O = (2E)-4-hydroxy-3-methylbut-2-enyl diphosphate + 2 reduced [2Fe-2S]-[ferredoxin] + 2 H(+). It catalyses the reaction dimethylallyl diphosphate + 2 oxidized [2Fe-2S]-[ferredoxin] + H2O = (2E)-4-hydroxy-3-methylbut-2-enyl diphosphate + 2 reduced [2Fe-2S]-[ferredoxin] + 2 H(+). Its pathway is isoprenoid biosynthesis; dimethylallyl diphosphate biosynthesis; dimethylallyl diphosphate from (2E)-4-hydroxy-3-methylbutenyl diphosphate: step 1/1. It functions in the pathway isoprenoid biosynthesis; isopentenyl diphosphate biosynthesis via DXP pathway; isopentenyl diphosphate from 1-deoxy-D-xylulose 5-phosphate: step 6/6. Its function is as follows. Catalyzes the conversion of 1-hydroxy-2-methyl-2-(E)-butenyl 4-diphosphate (HMBPP) into a mixture of isopentenyl diphosphate (IPP) and dimethylallyl diphosphate (DMAPP). Acts in the terminal step of the DOXP/MEP pathway for isoprenoid precursor biosynthesis. This is 4-hydroxy-3-methylbut-2-enyl diphosphate reductase from Brevibacillus brevis (strain 47 / JCM 6285 / NBRC 100599).